Consider the following 176-residue polypeptide: NADH-dependent flavin reductase (176 aa).

Residues E39–T46 and N48–A49 contribute to the FAD site. S52 lines the NAD(+) pocket. Residues S63 to S65, K69 to M70, and H95 to F96 contribute to the FAD site. Residues H137 and F157–G160 contribute to the NAD(+) site.

It belongs to the non-flavoprotein flavin reductase family. Homodimer. 4-nitrophenol 2-monooxygenase complex consists of an oxygenase component NphA1 and a flavin reductase component NphA2.

The enzyme catalyses a reduced flavin + NAD(+) = an oxidized flavin + NADH + 2 H(+). Functionally, catalyzes the reduction of FAD with the concomitant oxidation of NADH. NAD is the physiological electron donor. Subsequently, the reduced flavins diffuse to the oxygenase component NphA2. The polypeptide is NADH-dependent flavin reductase (nphA2) (Rhodococcus sp).